The chain runs to 391 residues: Chorismate synthase (391 aa).

An NADP(+)-binding site is contributed by Arg48. Residues 126-128 (RAS), Gly286, 301-305 (KPTSS), and Arg328 each bind FMN.

Belongs to the chorismate synthase family. FMNH2 is required as a cofactor.

It catalyses the reaction 5-O-(1-carboxyvinyl)-3-phosphoshikimate = chorismate + phosphate. Its pathway is metabolic intermediate biosynthesis; chorismate biosynthesis; chorismate from D-erythrose 4-phosphate and phosphoenolpyruvate: step 7/7. Its function is as follows. Catalyzes the anti-1,4-elimination of the C-3 phosphate and the C-6 proR hydrogen from 5-enolpyruvylshikimate-3-phosphate (EPSP) to yield chorismate, which is the branch point compound that serves as the starting substrate for the three terminal pathways of aromatic amino acid biosynthesis. This reaction introduces a second double bond into the aromatic ring system. The chain is Chorismate synthase from Saccharolobus solfataricus (strain ATCC 35092 / DSM 1617 / JCM 11322 / P2) (Sulfolobus solfataricus).